The sequence spans 167 residues: Small ribosomal subunit protein uS5 (167 aa).

In terms of domain architecture, S5 DRBM spans 12–75 (LQEKLITVNR…EKARRNMVTI (64 aa)).

The protein belongs to the universal ribosomal protein uS5 family. In terms of assembly, part of the 30S ribosomal subunit. Contacts proteins S4 and S8.

Functionally, with S4 and S12 plays an important role in translational accuracy. In terms of biological role, located at the back of the 30S subunit body where it stabilizes the conformation of the head with respect to the body. The polypeptide is Small ribosomal subunit protein uS5 (Buchnera aphidicola subsp. Schizaphis graminum (strain Sg)).